Reading from the N-terminus, the 411-residue chain is Translation initiation factor 2 subunit gamma (411 aa).

Residues 9–203 (QAEVNIGMVG…AIEEFIPTPK (195 aa)) enclose the tr-type G domain. The segment at 18–25 (GHVDHGKT) is G1. Asp21, Thr25, Gly46, and Thr48 together coordinate Mg(2+). Position 21 to 26 (21 to 26 (DHGKTT)) interacts with GTP. A G2 region spans residues 46-50 (GITIK). Positions 61, 64, 73, and 76 each coordinate Zn(2+). Residues 90 to 93 (DSPG) form a G3 region. Residues 146-149 (NKIE) and 181-183 (SAL) contribute to the GTP site. Residues 146–149 (NKIE) are G4. The G5 stretch occupies residues 181 to 183 (SAL).

This sequence belongs to the TRAFAC class translation factor GTPase superfamily. Classic translation factor GTPase family. EIF2G subfamily. In terms of assembly, heterotrimer composed of an alpha, a beta and a gamma chain. The cofactor is Mg(2+).

It carries out the reaction GTP + H2O = GDP + phosphate + H(+). Functionally, eIF-2 functions in the early steps of protein synthesis by forming a ternary complex with GTP and initiator tRNA. In Pyrococcus furiosus (strain ATCC 43587 / DSM 3638 / JCM 8422 / Vc1), this protein is Translation initiation factor 2 subunit gamma.